A 256-amino-acid chain; its full sequence is Cell division protein DivIB (256 aa).

Over 1–30 the chain is Cytoplasmic; sequence MNNSKVIKLQDRVPKLKNQKKKNKKNVNHR. Residues 31–51 form a helical membrane-spanning segment; that stretch reads LILYISILFLLVLFLIYFRSP. Over 52-256 the chain is Extracellular; that stretch reads LSNIKKISVF…KELGAEEKKE (205 aa). A POTRA domain is found at 53–121; it reads SNIKKISVFG…NNIDIHIEEY (69 aa).

Belongs to the FtsQ/DivIB family. DivIB subfamily.

It localises to the cell membrane. Its function is as follows. Cell division protein that may be involved in stabilizing or promoting the assembly of the division complex. This Bacillus cereus (strain ATCC 14579 / DSM 31 / CCUG 7414 / JCM 2152 / NBRC 15305 / NCIMB 9373 / NCTC 2599 / NRRL B-3711) protein is Cell division protein DivIB.